The primary structure comprises 370 residues: Aminomethyltransferase (370 aa).

The protein belongs to the GcvT family. In terms of assembly, the glycine cleavage system is composed of four proteins: P, T, L and H.

It carries out the reaction N(6)-[(R)-S(8)-aminomethyldihydrolipoyl]-L-lysyl-[protein] + (6S)-5,6,7,8-tetrahydrofolate = N(6)-[(R)-dihydrolipoyl]-L-lysyl-[protein] + (6R)-5,10-methylene-5,6,7,8-tetrahydrofolate + NH4(+). The glycine cleavage system catalyzes the degradation of glycine. In Clostridium botulinum (strain ATCC 19397 / Type A), this protein is Aminomethyltransferase.